The following is a 496-amino-acid chain: Lysine--tRNA ligase (496 aa).

Mg(2+) contacts are provided by Glu407 and Glu414.

It belongs to the class-II aminoacyl-tRNA synthetase family. As to quaternary structure, homodimer. It depends on Mg(2+) as a cofactor.

It localises to the cytoplasm. The catalysed reaction is tRNA(Lys) + L-lysine + ATP = L-lysyl-tRNA(Lys) + AMP + diphosphate. The polypeptide is Lysine--tRNA ligase (Staphylococcus haemolyticus (strain JCSC1435)).